The chain runs to 189 residues: MAPAWSFLLALLLLSCNAICSLGCHLPHTHSLPNRRVLTLLRQLRRVSPSSCLQDRNDFAFPQEALGGSQLQKAQAISVLHEVTQHTFQLFSTEGSAAAWDESLLDKLRAALDQQLTDLQACLRQEEGLRGAPLLKEDASLAVRKYFHRLTLYLREKRHNPCAWEVVRAEVMRAFSSSTNLQERFRRKD.

Residues Met1–Gly23 form the signal peptide. Disulfide bonds link Cys24–Cys122 and Cys52–Cys162.

Belongs to the alpha/beta interferon family.

It is found in the secreted. Its function is as follows. Produced by macrophages, IFN-alpha have antiviral activities. Interferon stimulates the production of two enzymes: a protein kinase and an oligoadenylate synthetase. The chain is Interferon alpha-H (IFNAH) from Bos taurus (Bovine).